The chain runs to 649 residues: Protein phosphatase Slingshot homolog 3 (649 aa).

The segment covering 1-20 has biased composition (polar residues); the sequence is MALVTVSRSPPASGHSTPVG. Positions 1–32 are disordered; the sequence is MALVTVSRSPPASGHSTPVGPTQDRVVRRRGR. Ala2 bears the N-acetylalanine mark. Ser9 and Ser38 each carry phosphoserine. A disordered region spans residues 49 to 90; the sequence is LQDGGDSNVASEADSEPMEEPSGEEQPTEDQTDKGQGLQSPW. Residues 61–78 are compositionally biased toward acidic residues; the sequence is ADSEPMEEPSGEEQPTED. At Ser88 the chain carries Phosphoserine. The DEK-C domain occupies 266 to 321; the sequence is EKMEQAILAELWQVLDTSDLDSVTSKEIRQALELRLGCPLQQYRDFIDNQMLLLMA. The Tyrosine-protein phosphatase domain occupies 325–466; sequence RASRIFPHLY…LRTYQGILTA (142 aa). The active-site Phosphocysteine intermediate is the Cys410. Low complexity-rich tracts occupy residues 541–551 and 608–627; these read LEPSESESTPE and TRAFQEQGQGQEQSEPGMSS. 2 disordered regions span residues 541-586 and 608-649; these read LEPS…KGPW and TRAF…EDKA. The span at 639-649 shows a compositional bias: basic and acidic residues; sequence SVDDSREEDKA.

The protein belongs to the protein-tyrosine phosphatase family. As to quaternary structure, does not bind to, or colocalize with, filamentous actin. In terms of tissue distribution, expressed in brain, small intestine and testis. Also expressed at lower levels in heart, kidney, liver, spleen and thymus.

The protein localises to the cytoplasm. The protein resides in the cytoskeleton. It is found in the nucleus. The enzyme catalyses O-phospho-L-tyrosyl-[protein] + H2O = L-tyrosyl-[protein] + phosphate. It carries out the reaction O-phospho-L-seryl-[protein] + H2O = L-seryl-[protein] + phosphate. The catalysed reaction is O-phospho-L-threonyl-[protein] + H2O = L-threonyl-[protein] + phosphate. Functionally, protein phosphatase which may play a role in the regulation of actin filament dynamics. Can dephosphorylate and activate the actin binding/depolymerizing factor cofilin, which subsequently binds to actin filaments and stimulates their disassembly. The polypeptide is Protein phosphatase Slingshot homolog 3 (Ssh3) (Mus musculus (Mouse)).